A 177-amino-acid chain; its full sequence is Alpha-crystallin B chain (177 aa).

Position 1 is an N-acetylmethionine (methionine 1). One can recognise a sHSP domain in the interval 58–166 (RMPSWAQTGL…PERSVPISRD (109 aa)). Histidine 85, histidine 106, glutamate 108, histidine 113, and histidine 121 together coordinate Zn(2+). Over residues 155–169 (DVPERSVPISRDEKP) the composition is skewed to basic and acidic residues. The interval 155–177 (DVPERSVPISRDEKPAVAGPQQK) is disordered.

Belongs to the small heat shock protein (HSP20) family. As to quaternary structure, heteromer composed of three CRYAA and one CRYAB subunits. Aggregates with homologous proteins, including the small heat shock protein HSPB1, to form large heteromeric complexes. Inter-subunit bridging via zinc ions enhances stability, which is crucial as there is no protein turn over in the lens. Interacts with HSPBAP1 and TTN/titin.

Its function is as follows. May contribute to the transparency and refractive index of the lens. The sequence is that of Alpha-crystallin B chain (CRYAB) from Squalus acanthias (Spiny dogfish).